The primary structure comprises 195 residues: UPF0314 protein RHE_CH03951 (195 aa).

Helical transmembrane passes span 14–34, 64–84, 128–148, and 150–170; these read AFWF…EYLM, WYTP…YLIL, DSIL…FFAA, and APVA…GYVI.

It belongs to the UPF0314 family.

The protein resides in the cell membrane. This is UPF0314 protein RHE_CH03951 from Rhizobium etli (strain ATCC 51251 / DSM 11541 / JCM 21823 / NBRC 15573 / CFN 42).